A 350-amino-acid polypeptide reads, in one-letter code: Phosphotriesterase-related protein (350 aa).

His-22, His-24, Glu-169, His-201, His-230, and Asp-298 together coordinate a divalent metal cation.

Belongs to the metallo-dependent hydrolases superfamily. Phosphotriesterase family. It depends on a divalent metal cation as a cofactor.

In Drosophila mojavensis (Fruit fly), this protein is Phosphotriesterase-related protein.